Consider the following 307-residue polypeptide: tRNA dimethylallyltransferase (307 aa).

9–16 (GPTAVGKT) contacts ATP. 11-16 (TAVGKT) provides a ligand contact to substrate. The interval 34 to 37 (DSMQ) is interaction with substrate tRNA.

Belongs to the IPP transferase family. As to quaternary structure, monomer. Requires Mg(2+) as cofactor.

It catalyses the reaction adenosine(37) in tRNA + dimethylallyl diphosphate = N(6)-dimethylallyladenosine(37) in tRNA + diphosphate. Catalyzes the transfer of a dimethylallyl group onto the adenine at position 37 in tRNAs that read codons beginning with uridine, leading to the formation of N6-(dimethylallyl)adenosine (i(6)A). In Limosilactobacillus fermentum (strain NBRC 3956 / LMG 18251) (Lactobacillus fermentum), this protein is tRNA dimethylallyltransferase.